Consider the following 204-residue polypeptide: ATP phosphoribosyltransferase (204 aa).

It belongs to the ATP phosphoribosyltransferase family. Short subfamily. Heteromultimer composed of HisG and HisZ subunits.

The protein localises to the cytoplasm. The catalysed reaction is 1-(5-phospho-beta-D-ribosyl)-ATP + diphosphate = 5-phospho-alpha-D-ribose 1-diphosphate + ATP. The protein operates within amino-acid biosynthesis; L-histidine biosynthesis; L-histidine from 5-phospho-alpha-D-ribose 1-diphosphate: step 1/9. Its function is as follows. Catalyzes the condensation of ATP and 5-phosphoribose 1-diphosphate to form N'-(5'-phosphoribosyl)-ATP (PR-ATP). Has a crucial role in the pathway because the rate of histidine biosynthesis seems to be controlled primarily by regulation of HisG enzymatic activity. The polypeptide is ATP phosphoribosyltransferase (Campylobacter concisus (strain 13826)).